The chain runs to 419 residues: Synaptic vesicle membrane protein VAT-1 homolog-like (419 aa).

Residues 1–25 (MAKEGVEKAEETEQMIEKEAGKEPA) show a composition bias toward basic and acidic residues. 2 disordered regions span residues 1-36 (MAKE…SHRL) and 384-419 (PTPL…PFIQ). Phosphoserine is present on S392. 2 positions are modified to phosphothreonine: T393 and T395. S396 bears the Phosphoserine mark. Acidic residues predominate over residues 397 to 407 (EAGEEEEDHEG). A compositionally biased stretch (basic and acidic residues) spans 408–419 (DSENKERMPFIQ).

The protein belongs to the zinc-containing alcohol dehydrogenase family. Quinone oxidoreductase subfamily. In terms of tissue distribution, detected in skin fibroblasts.

The sequence is that of Synaptic vesicle membrane protein VAT-1 homolog-like (VAT1L) from Homo sapiens (Human).